The following is a 685-amino-acid chain: Sodium/glucose cotransporter 4 (685 aa).

Residues 1-20 are disordered; the sequence is MNTELVAMEPGVSRNGVRTE. Residues 1–32 are Extracellular-facing; that stretch reads MNTELVAMEPGVSRNGVRTETTTNPSLGLHTY. The chain crosses the membrane as a helical span at residues 33–53; that stretch reads DIVVVVIYFVFVLAVGIWSSI. Residues 54–71 lie on the Cytoplasmic side of the membrane; the sequence is RASRGTVGGYFLAGRSMT. A helical transmembrane segment spans residues 72-94; the sequence is WWPIGASLMSSNVGSGLFIGLAG. The Extracellular segment spans residues 95–110; that stretch reads TGAAGGLAVGGFEWNA. Residues 111-131 traverse the membrane as a helical segment; sequence TFLLLALGWIFVPVYIAAGVV. Residues 132-153 are Cytoplasmic-facing; the sequence is TMPQYLKKRFGGQRIQVYMSVL. Residues 154 to 174 traverse the membrane as a helical segment; sequence SLILYIFTKISTDIFSGALFI. Residues 175-186 are Extracellular-facing; the sequence is QMALGWNLYLST. The helical transmembrane segment at 187 to 207 threads the bilayer; that stretch reads VILLVVTAVYTIAGGLTAVIY. Topologically, residues 208 to 213 are cytoplasmic; that stretch reads TDALQT. Residues 214–234 form a helical membrane-spanning segment; the sequence is VIMVGGALVLMFLGFQEVGWY. Topologically, residues 235 to 271 are extracellular; sequence PGLQQLYRQAIPNTTVPNTTCHLPRPDAFHMLRDPVN. N-linked (GlcNAc...) asparagine glycosylation is present at asparagine 247. The helical transmembrane segment at 272–292 threads the bilayer; the sequence is GDIPWPGLIFGLTVLATWCWC. Topologically, residues 293-313 are cytoplasmic; that stretch reads TDQVIVQRSLAAKNLSHAKGG. A helical transmembrane segment spans residues 314-334; that stretch reads SVLGGYLKILPMFFIVMPGMI. Over 335–379 the chain is Extracellular; sequence SRALYPDEVACVDPDICQRVCGARVGCSNIAYPKLVMALMPVGLR. A helical membrane pass occupies residues 380–402; it reads GLMIAVIMAALMSSLTSIFNSSS. The Cytoplasmic segment spans residues 403-423; it reads TLFAIDVWQRFRRQASEQELM. Residues 424 to 444 traverse the membrane as a helical segment; sequence VVGRLFVVFLVVISILWIPII. Residues 445–455 lie on the Extracellular side of the membrane; sequence QSSNSGQLFDY. The helical transmembrane segment at 456–476 threads the bilayer; the sequence is IQSITSYLAPPITALFLLAIF. The Cytoplasmic portion of the chain corresponds to 477–483; it reads CKRVNEP. The chain crosses the membrane as a helical span at residues 484-504; it reads GAFWGLMFGLVVGILRMILEF. Residues 505–526 are Extracellular-facing; that stretch reads SYSAPACGEMDRRPAVLKDFHY. A helical membrane pass occupies residues 527-547; sequence LYFALLLCGLTAIIIVVISFF. At 548-664 the chain is on the cytoplasmic side; sequence TEPIPDDKLA…SIEEEPLWRR (117 aa). Residues 577–616 form a disordered region; it reads VSVNNTEDDNSPGLAGRPVVEGPAGDEEEANTTQGPEQPG. Residues 665 to 685 form a helical membrane-spanning segment; the sequence is VCNINAIILLAINIFLWGYFA.

The protein belongs to the sodium:solute symporter (SSF) (TC 2.A.21) family.

The protein localises to the cell membrane. It catalyses the reaction D-mannose(out) + n Na(+)(out) = D-mannose(in) + n Na(+)(in). In terms of biological role, electrogenic Na(+)-coupled sugar symporter that may play a primary role in D-mannose and possibly D-fructose and D-glucose transport at the plasma membrane. Transporter activity is driven by a transmembrane Na(+) electrochemical gradient set by the Na(+)/K(+) pump. Exclusively recognizes sugar substrates having a pyranose ring with an axial hydroxyl group on carbon 2. The chain is Sodium/glucose cotransporter 4 (Slc5a9) from Mus musculus (Mouse).